The chain runs to 474 residues: MTNPIHIVGGGLAGSEAAWQVAQGGRTVVLHEMRPVRATDAHHTDGLAELVCSNSFRSDDANGNAVGLLHQEMRSLDSLIMRTADAHQVPAGGALAVDREGFSRAVTAALEDHPNITILREEVAGLPPEDWGSTILATGPLTSPALAEAVGTLTGRESLAFFDAIAPIVHRDSIDMGKAWFQSRYDKAGPGGTGADYLNCPMDREQYEAFVAALIAGEKTAFKEWEASTPYFDGCLPIEVMAERGPETLRHGPMKPVGLTNPHNPTVKAYAIVQLRQDNALGTLFNMVGFQTKLRHAEQVRVFRTIPGLENAEFARLGGLHRNTYLDSPRLLDATLRLKARPQLRFAGQITGCEGYVESAAVGLMAGRYALAEAEGQTLAPLPPTTALGALIGHITGGHVEATEEAERNAPRSFQPMNVNFGLFPPLAQMPRNETGKRLRGPEKAALKKRALTDRARADLAAWMTGERLPHAAE.

Residue 9-14 participates in FAD binding; the sequence is GGGLAG.

Belongs to the MnmG family. TrmFO subfamily. Requires FAD as cofactor.

It localises to the cytoplasm. It catalyses the reaction uridine(54) in tRNA + (6R)-5,10-methylene-5,6,7,8-tetrahydrofolate + NADH + H(+) = 5-methyluridine(54) in tRNA + (6S)-5,6,7,8-tetrahydrofolate + NAD(+). It carries out the reaction uridine(54) in tRNA + (6R)-5,10-methylene-5,6,7,8-tetrahydrofolate + NADPH + H(+) = 5-methyluridine(54) in tRNA + (6S)-5,6,7,8-tetrahydrofolate + NADP(+). Functionally, catalyzes the folate-dependent formation of 5-methyl-uridine at position 54 (M-5-U54) in all tRNAs. The sequence is that of Methylenetetrahydrofolate--tRNA-(uracil-5-)-methyltransferase TrmFO from Methylorubrum extorquens (strain PA1) (Methylobacterium extorquens).